A 432-amino-acid polypeptide reads, in one-letter code: Enolase 1 (432 aa).

Gln163 contributes to the (2R)-2-phosphoglycerate binding site. Residue Glu205 is the Proton donor of the active site. Mg(2+) is bound by residues Asp242, Glu287, and Asp314. (2R)-2-phosphoglycerate contacts are provided by Lys339, Arg368, Ser369, and Lys390. Residue Lys339 is the Proton acceptor of the active site.

It belongs to the enolase family. Mg(2+) serves as cofactor.

The protein localises to the cytoplasm. It is found in the secreted. It localises to the cell surface. The enzyme catalyses (2R)-2-phosphoglycerate = phosphoenolpyruvate + H2O. The protein operates within carbohydrate degradation; glycolysis; pyruvate from D-glyceraldehyde 3-phosphate: step 4/5. Functionally, catalyzes the reversible conversion of 2-phosphoglycerate (2-PG) into phosphoenolpyruvate (PEP). It is essential for the degradation of carbohydrates via glycolysis. This is Enolase 1 from Lactobacillus johnsonii (strain CNCM I-12250 / La1 / NCC 533).